The chain runs to 1009 residues: Probable beta-galactosidase B (1009 aa).

The first 21 residues, 1-21, serve as a signal peptide directing secretion; it reads MAQLFTKIIVYFLLFASPLLA. An N-linked (GlcNAc...) asparagine glycan is attached at Asn28. Tyr85 is a substrate binding site. Asn95 is a glycosylation site (N-linked (GlcNAc...) asparagine). Residues Asn130, Ala131, Glu132, and Asn190 each coordinate substrate. Catalysis depends on Glu191, which acts as the Proton donor. A glycan (N-linked (GlcNAc...) asparagine) is linked at Asn247. Residue Tyr260 participates in substrate binding. Cys266 and Cys319 form a disulfide bridge. Residue Glu303 is the Nucleophile of the active site. A substrate-binding site is contributed by Tyr368. 10 N-linked (GlcNAc...) asparagine glycosylation sites follow: Asn375, Asn406, Asn427, Asn451, Asn682, Asn740, Asn771, Asn784, Asn826, and Asn883.

This sequence belongs to the glycosyl hydrolase 35 family.

Its subcellular location is the secreted. It carries out the reaction Hydrolysis of terminal non-reducing beta-D-galactose residues in beta-D-galactosides.. Cleaves beta-linked terminal galactosyl residues from gangliosides, glycoproteins, and glycosaminoglycans. The polypeptide is Probable beta-galactosidase B (lacB) (Talaromyces marneffei (strain ATCC 18224 / CBS 334.59 / QM 7333) (Penicillium marneffei)).